A 528-amino-acid polypeptide reads, in one-letter code: T-complex protein 1 subunit gamma (528 aa).

At S250 the chain carries Phosphoserine. An intrachain disulfide couples C364 to C370.

It belongs to the TCP-1 chaperonin family. In terms of assembly, heterooligomeric complex of about 850 to 900 kDa that forms two stacked rings, 12 to 16 nm in diameter.

The protein resides in the cytoplasm. In terms of biological role, molecular chaperone; assists the folding of proteins upon ATP hydrolysis. Known to play a role, in vitro, in the folding of actin and tubulin. The polypeptide is T-complex protein 1 subunit gamma (cct3) (Schizosaccharomyces pombe (strain 972 / ATCC 24843) (Fission yeast)).